The primary structure comprises 1205 residues: Plasma membrane calcium-transporting ATPase 4 (1205 aa).

At Met1–Ala100 the chain is on the cytoplasmic side. A helical transmembrane segment spans residues Leu101–Phe121. Topologically, residues Tyr122–Thr147 are extracellular. A helical transmembrane segment spans residues Gly148–Phe168. Residues Asn169 to Leu369 lie on the Cytoplasmic side of the membrane. The segment at Asp294–Asp318 is disordered. Ser329 and Ser335 each carry phosphoserine. The helical transmembrane segment at Ile370–Ile390 threads the bilayer. The Extracellular portion of the chain corresponds to Gln391–Lys409. A helical transmembrane segment spans residues Phe410–Val430. The Cytoplasmic segment spans residues Thr431 to Phe844. The active-site 4-aspartylphosphate intermediate is the Asp466. Mg(2+) contacts are provided by Asp786 and Asp790. A helical membrane pass occupies residues Leu845 to Ile865. The Extracellular segment spans residues Thr866 to Lys872. The chain crosses the membrane as a helical span at residues Ala873–Thr893. The Cytoplasmic portion of the chain corresponds to Glu894–Lys919. A helical membrane pass occupies residues Asn920–Leu942. The Extracellular portion of the chain corresponds to Phe943 to Pro956. Residues Pro957–Ala979 traverse the membrane as a helical segment. At Arg980 to Asn995 the chain is on the cytoplasmic side. A helical membrane pass occupies residues Ile996–Gly1016. Over Gly1017–Gln1029 the chain is Extracellular. A helical transmembrane segment spans residues Trp1030–Ile1050. At Pro1051–Val1205 the chain is on the cytoplasmic side. Ser1065 and Ser1071 each carry phosphoserine. Arg1072 is subject to Omega-N-methylarginine. The tract at residues Leu1087–Gln1104 is calmodulin-binding subdomain A. At Thr1103 the chain carries Phosphothreonine; by PKC. The calmodulin-binding subdomain B stretch occupies residues Ile1105–Asn1114. Ser1145 carries the post-translational modification Phosphoserine.

It belongs to the cation transport ATPase (P-type) (TC 3.A.3) family. Type IIB subfamily. Interacts with PDZD11. Interacts with SLC35G1 and STIM1. Interacts with calmodulin. In terms of tissue distribution, specifically expressed by sperm in testis (at protein level).

It localises to the membrane. It is found in the cell projection. The protein localises to the cilium. The protein resides in the flagellum membrane. It carries out the reaction Ca(2+)(in) + ATP + H2O = Ca(2+)(out) + ADP + phosphate + H(+). With respect to regulation, activated by calcium/calmodulin. In terms of biological role, calcium/calmodulin-regulated and magnesium-dependent enzyme that catalyzes the hydrolysis of ATP coupled with the transport of calcium out of the cell. By regulating sperm cell calcium homeostasis, may play a role in sperm motility. The protein is Plasma membrane calcium-transporting ATPase 4 of Mus musculus (Mouse).